The sequence spans 151 residues: MSTPENRPVSFFSLFRRGQHYSKTWPTDKRLAPVFIENRVIRATRFAIRIMPPVAVFTLCWQIALGGQLGPAVATALFALSMPMQGLWWLGKRSVTPLPPGTLNWFYEVRTKLQEAGQALAPVEGKPDYQALADTLKRAFKQLDKTFLDDL.

2 helical membrane passes run 46-65 (FAIR…QIAL) and 69-91 (LGPA…WWLG).

The protein belongs to the UPF0208 family.

The protein localises to the cell inner membrane. The sequence is that of UPF0208 membrane protein ESA_00924 from Cronobacter sakazakii (strain ATCC BAA-894) (Enterobacter sakazakii).